A 433-amino-acid polypeptide reads, in one-letter code: Adenylosuccinate synthetase (433 aa).

GTP-binding positions include 11–17 and 39–41; these read GDEGKGK and GHT. The Proton acceptor role is filled by Asp12. Mg(2+)-binding residues include Asp12 and Gly39. Residues 12 to 15, 37 to 40, Thr134, Arg148, Asn230, Thr245, and Arg309 each bind IMP; these read DEGK and NAGH. His40 serves as the catalytic Proton donor. A substrate-binding site is contributed by 305–311; that stretch reads VTTGRKR. GTP is bound by residues Arg311, 337–339, and 419–421; these read KLD and GTG.

Belongs to the adenylosuccinate synthetase family. As to quaternary structure, homodimer. Requires Mg(2+) as cofactor.

The protein resides in the cytoplasm. The catalysed reaction is IMP + L-aspartate + GTP = N(6)-(1,2-dicarboxyethyl)-AMP + GDP + phosphate + 2 H(+). It functions in the pathway purine metabolism; AMP biosynthesis via de novo pathway; AMP from IMP: step 1/2. Functionally, plays an important role in the de novo pathway and in the salvage pathway of purine nucleotide biosynthesis. Catalyzes the first committed step in the biosynthesis of AMP from IMP. The protein is Adenylosuccinate synthetase of Saccharomyces cerevisiae (strain JAY291) (Baker's yeast).